Reading from the N-terminus, the 374-residue chain is MSNVQSQSNSHHPVHNIVNRSPTSRSEQQIRSIPPTNNNNNNNNNSINNINNNTQRQPLNNNNNNNNNINRNNSNLYPSYADQPDILRSSQKDEYYKKLFEDQCFEMLTRITGPRFIMNRQSESKLLANTIYYLLTTMIGSQTLGEEYCNLRKIKDKTFSIPSIPDRIKLYFFHLLAPYLIKKSLPKLFQRHPKLYILKEIFPKFERLHLALFYFNGSYFEFSKRLSDIRYIFNRKIDQKRPKYDILGLLIIIQILLSTFMYLKENSFFLKQQQKDGGCNGDGEEDNQDLNKDIKIEQVDSVINNNNQDQNNNQEEEEEQKCTLCLEVRTHTTATICGHLFCWHCITEWCNNKEQCPVCRCPISIRTCVPLYNY.

Polar residues-rich tracts occupy residues 1 to 11 (MSNVQSQSNSH) and 18 to 31 (VNRS…QQIR). At 1-82 (MSNVQSQSNS…NSNLYPSYAD (82 aa)) the chain is on the peroxisomal matrix side. Positions 1–82 (MSNVQSQSNS…NSNLYPSYAD (82 aa)) are disordered. The segment covering 35 to 76 (PTNNNNNNNNNSINNINNNTQRQPLNNNNNNNNNINRNNSNL) has biased composition (low complexity). A helical membrane pass occupies residues 83 to 112 (QPDILRSSQKDEYYKKLFEDQCFEMLTRIT). G113 is a topological domain (cytoplasmic). The chain crosses the membrane as a helical span at residues 114 to 135 (PRFIMNRQSESKLLANTIYYLL). Residues 136 to 165 (TTMIGSQTLGEEYCNLRKIKDKTFSIPSIP) lie on the Peroxisomal matrix side of the membrane. The chain crosses the membrane as a helical span at residues 166–181 (DRIKLYFFHLLAPYLI). The Cytoplasmic segment spans residues 182 to 192 (KKSLPKLFQRH). The chain crosses the membrane as a helical span at residues 193 to 216 (PKLYILKEIFPKFERLHLALFYFN). Residues 217–243 (GSYFEFSKRLSDIRYIFNRKIDQKRPK) lie on the Peroxisomal matrix side of the membrane. Residues 244 to 263 (YDILGLLIIIQILLSTFMYL) form a helical membrane-spanning segment. Over 264–374 (KENSFFLKQQ…IRTCVPLYNY (111 aa)) the chain is Cytoplasmic. Positions 322, 325, 337, 339, 342, 345, 356, and 359 each coordinate Zn(2+). The RING-type zinc-finger motif lies at 322 to 360 (CTLCLEVRTHTTATICGHLFCWHCITEWCNNKEQCPVCR).

This sequence belongs to the pex2/pex10/pex12 family. Component of the PEX2-PEX10-PEX12 retrotranslocation channel.

It is found in the peroxisome membrane. It carries out the reaction S-ubiquitinyl-[E2 ubiquitin-conjugating enzyme]-L-cysteine + [acceptor protein]-L-lysine = [E2 ubiquitin-conjugating enzyme]-L-cysteine + N(6)-ubiquitinyl-[acceptor protein]-L-lysine.. It functions in the pathway protein modification; protein ubiquitination. Its activity is regulated as follows. The E3 ubiquitin-protein ligase activity is stimulated by PEX12. Functionally, E3 ubiquitin-protein ligase component of a retrotranslocation channel required for peroxisome organization by mediating export of the PEX5 receptor from peroxisomes to the cytosol, thereby promoting PEX5 recycling. The retrotranslocation channel is composed of PEX2, PEX10 and PEX12; each subunit contributing transmembrane segments that coassemble into an open channel that specifically allows the passage of PEX5 through the peroxisomal membrane. PEX10 also regulates PEX5 recycling by acting as a E3 ubiquitin-protein ligase. When PEX5 recycling is compromised, PEX10 catalyzes polyubiquitination of PEX5 during its passage through the retrotranslocation channel, leading to its degradation. In Dictyostelium discoideum (Social amoeba), this protein is Peroxisome biogenesis factor 10 (pex10).